We begin with the raw amino-acid sequence, 87 residues long: DNA-directed RNA polymerase subunit omega (87 aa).

It belongs to the RNA polymerase subunit omega family. As to quaternary structure, the RNAP catalytic core consists of 2 alpha, 1 beta, 1 beta' and 1 omega subunit. When a sigma factor is associated with the core the holoenzyme is formed, which can initiate transcription.

It carries out the reaction RNA(n) + a ribonucleoside 5'-triphosphate = RNA(n+1) + diphosphate. Promotes RNA polymerase assembly. Latches the N- and C-terminal regions of the beta' subunit thereby facilitating its interaction with the beta and alpha subunits. The sequence is that of DNA-directed RNA polymerase subunit omega from Ectopseudomonas mendocina (strain ymp) (Pseudomonas mendocina).